The primary structure comprises 545 residues: uncharacterized protein (545 aa).

2 disordered regions span residues 1 to 162 (MSSG…DPQE) and 200 to 250 (YPPV…EPPP). Residues 86–100 (NYRSHSSADYLTPNS) show a composition bias toward polar residues. Composition is skewed to low complexity over residues 109–128 (TTPRRLPLQPQQQAPATATK) and 141–152 (SGASTSSGTSST). Composition is skewed to polar residues over residues 212–221 (SSRTGTLQRT) and 228–244 (ISSTPQPQPTYADQMQS). The PDZ domain occupies 458-540 (RVLVEKMMPG…VTITLLPAVG (83 aa)).

This is an uncharacterized protein from Caenorhabditis elegans.